The sequence spans 153 residues: Deoxyuridine 5'-triphosphate nucleotidohydrolase (153 aa).

Residues 71-73 (RSG), Asn84, 88-90 (LID), and Met98 each bind substrate.

Belongs to the dUTPase family. It depends on Mg(2+) as a cofactor.

It catalyses the reaction dUTP + H2O = dUMP + diphosphate + H(+). It functions in the pathway pyrimidine metabolism; dUMP biosynthesis; dUMP from dCTP (dUTP route): step 2/2. Functionally, this enzyme is involved in nucleotide metabolism: it produces dUMP, the immediate precursor of thymidine nucleotides and it decreases the intracellular concentration of dUTP so that uracil cannot be incorporated into DNA. This Wigglesworthia glossinidia brevipalpis protein is Deoxyuridine 5'-triphosphate nucleotidohydrolase.